Here is a 59-residue protein sequence, read N- to C-terminus: Large ribosomal subunit protein uL30 (59 aa).

Belongs to the universal ribosomal protein uL30 family. Part of the 50S ribosomal subunit.

This Pectobacterium atrosepticum (strain SCRI 1043 / ATCC BAA-672) (Erwinia carotovora subsp. atroseptica) protein is Large ribosomal subunit protein uL30.